The chain runs to 471 residues: Pneumolysin (471 aa).

The next 4 beta stranded transmembrane spans lie at 158-171 (MEQL…DFEK), 178-187 (IDFNSVHSGE), 256-265 (SDEVEAAFEA), and 273-285 (APQT…LDNT). Residues 427–437 (ECTGLAWEWWR) carry the Conserved undecapeptide motif. The Cholesterol binding motif lies at 459–460 (TL).

It belongs to the cholesterol-dependent cytolysin family. Homooligomeric pore complex of 35 to 50 subunits; when inserted in the host membrane. Post-translationally, has a slightly altered apparent molecular weight in a secA2 deletion mutant, but no post-translational modifications have been found.

It is found in the secreted. It localises to the cell wall. The protein resides in the host cell membrane. In terms of biological role, a cholesterol-dependent toxin that causes cytolysis by forming pores in cholesterol containing host membranes. After binding to target membranes, the protein undergoes a major conformation change, leading to its insertion in the host membrane and formation of an oligomeric pore complex. Cholesterol is required for binding to host membranes, membrane insertion and pore formation; cholesterol binding is mediated by a Thr-Leu pair in the C-terminus. Can be reversibly inactivated by oxidation. The sequence is that of Pneumolysin (ply) from Streptococcus pneumoniae serotype 4 (strain ATCC BAA-334 / TIGR4).